The following is a 101-amino-acid chain: Small ribosomal subunit protein uS14 (101 aa).

The protein belongs to the universal ribosomal protein uS14 family. As to quaternary structure, part of the 30S ribosomal subunit. Contacts proteins S3 and S10.

In terms of biological role, binds 16S rRNA, required for the assembly of 30S particles and may also be responsible for determining the conformation of the 16S rRNA at the A site. This chain is Small ribosomal subunit protein uS14, found in Shewanella piezotolerans (strain WP3 / JCM 13877).